A 230-amino-acid chain; its full sequence is Type II restriction enzyme SinI (230 aa).

It catalyses the reaction Endonucleolytic cleavage of DNA to give specific double-stranded fragments with terminal 5'-phosphates.. Its function is as follows. A P subtype restriction enzyme that recognizes the double-stranded sequence 5'-GGWCC-3' and cleaves after G-1. The chain is Type II restriction enzyme SinI (sinIR) from Salmonella infantis.